The sequence spans 285 residues: Tropomyosin alpha-3 chain (285 aa).

Positions 1-285 (MMEAIKKKMQ…DHALNDMTSI (285 aa)) form a coiled coil. Residue Met2 is modified to N-acetylmethionine. Residue Met2 is modified to N-acetylalanine. The segment covering 16–41 (KENALDRAEQAEAEQKQAEERSKQLE) has biased composition (basic and acidic residues). The disordered stretch occupies residues 16-44 (KENALDRAEQAEAEQKQAEERSKQLEDEL). The residue at position 54 (Thr54) is a Phosphothreonine. Phosphoserine is present on residues Ser62 and Ser88. A Phosphothreonine modification is found at Thr109. N6-acetyllysine is present on residues Glu125 and Leu177. Ser207 is subject to Phosphoserine. Residue Tyr215 is modified to N6-acetyllysine. Phosphoserine is present on Ser216. Residue Thr253 is modified to Phosphothreonine. Tyr262 carries the phosphotyrosine modification. Ser272 is modified (phosphoserine). A Phosphothreonine modification is found at Thr283. At Ser284 the chain carries Phosphoserine.

It belongs to the tropomyosin family. In terms of assembly, homodimer. Heterodimer of an alpha (TPM1, TPM3 or TPM4) and a beta (TPM2) chain. Interacts with TMOD1. Interacts with TNNT1.

The protein localises to the cytoplasm. It is found in the cytoskeleton. Binds to actin filaments in muscle and non-muscle cells. Plays a central role, in association with the troponin complex, in the calcium dependent regulation of vertebrate striated muscle contraction. Smooth muscle contraction is regulated by interaction with caldesmon. In non-muscle cells is implicated in stabilizing cytoskeleton actin filaments. This is Tropomyosin alpha-3 chain (TPM3) from Homo sapiens (Human).